Reading from the N-terminus, the 92-residue chain is uncharacterized protein (92 aa).

This is an uncharacterized protein from Haemophilus influenzae (strain ATCC 51907 / DSM 11121 / KW20 / Rd).